The sequence spans 130 residues: MNGKYYYGTGRRKSSVARVFLTKGTGQIIVNGRPVDEFFARETSRMVVRQPLVLTENAESLDIKVNVVGGGETGQSGAIRHGITRALIDFDAALKPALSQAGFVTRDAREVERKKPGLRKARRAKQFSKR.

It belongs to the universal ribosomal protein uS9 family.

The polypeptide is Small ribosomal subunit protein uS9 (Neisseria gonorrhoeae (strain ATCC 700825 / FA 1090)).